The following is a 93-amino-acid chain: U12-lycotoxin-Ls1a (93 aa).

Positions 1–18 (MKFAVILLFSLVVLAVAS) are cleaved as a signal peptide. Residues 19–38 (ESVEEVRREIDIEDLPEQQR) constitute a propeptide that is removed on maturation.

Belongs to the neurotoxin 31 family. Post-translationally, contains 5 disulfide bonds. In terms of tissue distribution, expressed by the venom gland.

Its subcellular location is the secreted. This chain is U12-lycotoxin-Ls1a, found in Lycosa singoriensis (Wolf spider).